The chain runs to 462 residues: Centrosomal protein of 55 kDa (462 aa).

Positions 1–11 (MSSRSPKDLIK) are enriched in basic and acidic residues. The disordered stretch occupies residues 1-25 (MSSRSPKDLIKSKWGSRPSSSKSDT). Positions 12–23 (SKWGSRPSSSKS) are enriched in low complexity. 2 coiled-coil regions span residues 50–185 (KVAN…QQWL) and 228–400 (YLQE…KQLH). Phosphoserine occurs at positions 96 and 99. An interaction with TSG101 region spans residues 157-235 (ANCFNSSMNS…EGYLQEEKQK (79 aa)). An interaction with PDCD6IP region spans residues 160 to 214 (FNSSMNSIHEKEMQLKDALEKNQQWLVYDQQREAYVKGLLAKIFELEKRTETAAA). Positions 354 to 462 (QMQACTLDFE…LLVHVEYCMK (109 aa)) are required for localization to the interphase centrosome and to the midbody during cytokinesis. Residues Ser423 and Ser426 each carry the phosphoserine modification. Thr428 is modified (phosphothreonine). Phosphoserine; by PLK1 is present on Ser434.

In terms of assembly, homodimer. Interacts (phosphorylated on Ser-423 and Ser-426) with PLK1; the interaction is indirect via the MTMR3:MTMR4 heterooligomer, occurs during early mitosis, regulates the phosphorylation of CEP55 by PLK1 and its recruitment to the midbody where it can mediate cell abscission. Interacts with AKAP9/CG-NAP; the interaction occurs in interphase and is lost upon mitotic entry. Interacts with PCNT/Kendrin; the interaction occurs in interphase and is lost upon mitotic entry. Directly interacts with PDCD6IP; this interaction is required for PDCD6IP targeting to the midbody; CEP55 binds PDCD6IP in a 2:1 stoichiometry; PDCD6IP competes with TSG101 for the same binding site. Interacts with TSG101; TSG101 competes with PDCD6IP for the same binding site; interaction is required for cytokinesis. Interacts with MVB12A, VPS37B, VPS37C and VPS28. Post-translationally, there is a hierachy of phosphorylation, where both Ser-423 and Ser-426 are phosphorylated at the onset of mitosis, prior to Ser-434. Phosphorylation at Ser-423 and Ser-426 is required for dissociation from the centrosome at the G2/M boundary. Phosphorylation at the 3 sites, Ser-423, Ser-426 and Ser-434, is required for protein function at the final stages of cell division to complete cytokinesis successfully.

The protein resides in the cytoplasm. Its subcellular location is the cytoskeleton. It is found in the microtubule organizing center. It localises to the centrosome. The protein localises to the centriole. The protein resides in the cleavage furrow. Its subcellular location is the midbody. It is found in the midbody ring. In terms of biological role, plays a role in mitotic exit and cytokinesis. Recruits PDCD6IP and TSG101 to midbody during cytokinesis. Required for successful completion of cytokinesis. Not required for microtubule nucleation. Plays a role in the development of the brain and kidney. The chain is Centrosomal protein of 55 kDa from Rattus norvegicus (Rat).